The chain runs to 177 residues: ATP synthase subunit delta (177 aa).

The protein belongs to the ATPase delta chain family. In terms of assembly, F-type ATPases have 2 components, F(1) - the catalytic core - and F(0) - the membrane proton channel. F(1) has five subunits: alpha(3), beta(3), gamma(1), delta(1), epsilon(1). F(0) has three main subunits: a(1), b(2) and c(10-14). The alpha and beta chains form an alternating ring which encloses part of the gamma chain. F(1) is attached to F(0) by a central stalk formed by the gamma and epsilon chains, while a peripheral stalk is formed by the delta and b chains.

It is found in the cell inner membrane. Functionally, f(1)F(0) ATP synthase produces ATP from ADP in the presence of a proton or sodium gradient. F-type ATPases consist of two structural domains, F(1) containing the extramembraneous catalytic core and F(0) containing the membrane proton channel, linked together by a central stalk and a peripheral stalk. During catalysis, ATP synthesis in the catalytic domain of F(1) is coupled via a rotary mechanism of the central stalk subunits to proton translocation. This protein is part of the stalk that links CF(0) to CF(1). It either transmits conformational changes from CF(0) to CF(1) or is implicated in proton conduction. The chain is ATP synthase subunit delta from Shewanella amazonensis (strain ATCC BAA-1098 / SB2B).